Here is a 141-residue protein sequence, read N- to C-terminus: Proteasome maturation protein (141 aa).

A Glycyl lysine isopeptide (Lys-Gly) (interchain with G-Cter in SUMO2) cross-link involves residue Lys39. The High-affinity association with the preproteasome motif lies at 68-72; sequence RNIQG.

Belongs to the POMP/UMP1 family. In terms of assembly, constituent of preproteasomes, but not of mature 20S proteasomes. Within the preproteasome, may directly interact with PSMB1/beta6, PSMB4/beta7, PSMB5/beta5, PSMB6/beta1 and PSMB9/beta1i. Interaction with PSMB8/beta5i has been observed in PubMed:10973495, but not in PubMed:10926487. Forms tetramers. In terms of tissue distribution, strongly expressed from the basal layer to the granular layer of healthy epidermis, whereas in KLICK patients there is a gradual decrease of expression toward the granular layer.

Its subcellular location is the cytoplasm. It localises to the cytosol. The protein localises to the nucleus. The protein resides in the microsome membrane. In terms of biological role, molecular chaperone essential for the assembly of standard proteasomes and immunoproteasomes. Degraded after completion of proteasome maturation. Mediates the association of 20S preproteasome with the endoplasmic reticulum. In Homo sapiens (Human), this protein is Proteasome maturation protein.